The chain runs to 483 residues: Cobyric acid synthase (483 aa).

The GATase cobBQ-type domain occupies 252-439; the sequence is KLNVVVPVLT…LHGFFDEAEA (188 aa). Cys333 (nucleophile) is an active-site residue. Residue His431 is part of the active site.

It belongs to the CobB/CobQ family. CobQ subfamily.

The protein operates within cofactor biosynthesis; adenosylcobalamin biosynthesis. Catalyzes amidations at positions B, D, E, and G on adenosylcobyrinic A,C-diamide. NH(2) groups are provided by glutamine, and one molecule of ATP is hydrogenolyzed for each amidation. The protein is Cobyric acid synthase of Vibrio parahaemolyticus serotype O3:K6 (strain RIMD 2210633).